The following is a 1235-amino-acid chain: UPF0507 protein DEHA2G04334g (1235 aa).

The VPS9 domain maps to 323–487 (QNDDSDAIKI…LSSSMNDEPQ (165 aa)). The segment at 1097–1124 (STTEADTTDTTDATDATHASPNLANSTN) is disordered. The span at 1100–1115 (EADTTDTTDATDATHA) shows a compositional bias: low complexity.

The protein belongs to the UPF0507 family.

This Debaryomyces hansenii (strain ATCC 36239 / CBS 767 / BCRC 21394 / JCM 1990 / NBRC 0083 / IGC 2968) (Yeast) protein is UPF0507 protein DEHA2G04334g.